The chain runs to 109 residues: MSQGVEFNRLMLEMRSMQMEAMAKAKPVQAPAEVGAPSFSEMLSQAVDKVNETQQASTAMANAFEVGQSGVDLTDVMIASQKASVSFQAMTQVRNKLVQAYQDIMQMPV.

It belongs to the FliE family.

It is found in the bacterial flagellum basal body. The chain is Flagellar hook-basal body complex protein FliE from Pseudomonas aeruginosa (strain LESB58).